A 1058-amino-acid chain; its full sequence is MGQEDGNRGERRAAGTPVEVTALYATDGCVITSSIALLTNSLLGAEPVYIFSYDAYTHDGRADGPTEQDRFEESRALYQASGGLNGDSFRVTFCLLGTEVGGTHQARGRTRPMFVCRFERADDVAALQDALAHGTPLQPDHIAATLDAEATFALHANMILALTVAINNASPRTGRDAAAAQYDQGASLRSLVGRTSLGQRGLTTLYVHHEVRVLAAYRRAYYGSAQSPFWFLSKFGPDEKSLVLTTRYYLLQAQRLGGAGATYDLQAIKDICATYAIPHAPRPDTVSAASLTSFAAITRFCCTSQYARGAAAAGFPLYVERRIAADVRETSALEKFITHDRSCLRVSDREFITYIYLAHFECFSPPRLATHLRAVTTHDPNPAASTEQPSPLGREAVEQFFCHVRAQLNIGEYVKHNVTPRETVLDGDTAKAYLRARTYAPGALTPAPAYCGAVDSATKMMGRLADAEKLLVPRGWPAFAPASPGEDTAGGTPPPQTCGIVKRLLRLAATEQQGPTPPAIAALIRNAAVQTPLPVYRISMVPTGQAFAALAWDDWARITRDARLAEAVVSAEAAAHPDHGALGRRLTDRIRAQGPVMPPGGLDAGGQMYVNRNEIFNGALAITNIILDLDIALKEPVPFRRLHEALGHFRRGALAAVQLLFPAARVDPDAYPCYFFKSACRPGPASVGSGSGLGNDDDGDWFPCYDDAGDEEWAEDPGAMDTSHDPPDDEVAYFDLCHEVGPTAEPRETDSPVCSCTDKIGLRVCMPVPAPYVVHGSLTMRGVARVIQQAVLLDRDFVEAIGSYVKNFLLIDTGVYAHGHSLRLPYFAKIAPDGPACGRLLPVFVIPPACKDVPAFVAAHADPRRFHFHAPPTYLASPREIRVLHSLGGDYVSFFERKASRNALEHFGRRETLTEVLGRYNVQPDAGGTVEGFASELLGRIVACIETHFPEHAGEYQAVSVRRAVSKDDWVLLQLVPVRGTLQQSLSCLRFKHGRASRATARTFVALSVGANNRLCVSLCQQCFAAKCDSNRLHTLFTIDAGTPCSPSVPCSTSQPSS.

The CHC2-type zinc-finger motif lies at 988 to 1028; that stretch reads CLRFKHGRASRATARTFVALSVGANNRLCVSLCQQCFAAKC.

Belongs to the herpesviridae DNA primase family. Associates with the helicase and the primase-associated factor to form the helicase-primase factor.

It is found in the host nucleus. In terms of biological role, essential component of the helicase/primase complex. Unwinds the DNA at the replication forks and generates single-stranded DNA for both leading and lagging strand synthesis. The primase initiates primer synthesis and thereby produces large amount of short RNA primers on the lagging strand that the polymerase elongates using dNTPs. The protein is DNA primase of Homo sapiens (Human).